Consider the following 189-residue polypeptide: Adenylate kinase (189 aa).

Position 11 to 16 (11 to 16) interacts with ATP; the sequence is GSGKGT. The segment at 31–60 is NMP; that stretch reads STGDVLRAEIKNGTELGKTAKGYIDQGQLI. Residues Thr-32, Arg-37, 58-60, 86-89, and Gln-93 each bind AMP; these read QLI and GFPR. The tract at residues 127–137 is LID; the sequence is KRGKESGRADD. Arg-128 is a binding site for ATP. Residues Arg-134 and Arg-145 each contribute to the AMP site. Residue Gly-173 participates in ATP binding.

The protein belongs to the adenylate kinase family. In terms of assembly, monomer.

It is found in the cytoplasm. It carries out the reaction AMP + ATP = 2 ADP. It functions in the pathway purine metabolism; AMP biosynthesis via salvage pathway; AMP from ADP: step 1/1. Its function is as follows. Catalyzes the reversible transfer of the terminal phosphate group between ATP and AMP. Plays an important role in cellular energy homeostasis and in adenine nucleotide metabolism. This Bacteroides fragilis (strain ATCC 25285 / DSM 2151 / CCUG 4856 / JCM 11019 / LMG 10263 / NCTC 9343 / Onslow / VPI 2553 / EN-2) protein is Adenylate kinase.